Here is a 280-residue protein sequence, read N- to C-terminus: 4-deoxy-L-threo-5-hexosulose-uronate ketol-isomerase (280 aa).

Zn(2+) contacts are provided by H198, H200, E205, and H247.

It belongs to the KduI family. Zn(2+) serves as cofactor.

The catalysed reaction is 5-dehydro-4-deoxy-D-glucuronate = 3-deoxy-D-glycero-2,5-hexodiulosonate. Its pathway is glycan metabolism; pectin degradation; 2-dehydro-3-deoxy-D-gluconate from pectin: step 4/5. Catalyzes the isomerization of 5-dehydro-4-deoxy-D-glucuronate to 3-deoxy-D-glycero-2,5-hexodiulosonate. This Lachnospira eligens (strain ATCC 27750 / DSM 3376 / VPI C15-48 / C15-B4) (Eubacterium eligens) protein is 4-deoxy-L-threo-5-hexosulose-uronate ketol-isomerase.